The chain runs to 169 residues: Lipoprotein signal peptidase (169 aa).

The next 4 helical transmembrane spans lie at 4-24, 42-62, 70-90, and 102-122; these read PICS…IVDL, LIPF…SFLA, WFFA…MYRS, and ALII…GAVI. Residues Asp-123 and Asp-141 contribute to the active site. Residues 137–157 traverse the membrane as a helical segment; the sequence is FNIADTAICIGAALVIFEGFI.

This sequence belongs to the peptidase A8 family.

The protein resides in the cell inner membrane. The enzyme catalyses Release of signal peptides from bacterial membrane prolipoproteins. Hydrolyzes -Xaa-Yaa-Zaa-|-(S,diacylglyceryl)Cys-, in which Xaa is hydrophobic (preferably Leu), and Yaa (Ala or Ser) and Zaa (Gly or Ala) have small, neutral side chains.. It participates in protein modification; lipoprotein biosynthesis (signal peptide cleavage). Its function is as follows. This protein specifically catalyzes the removal of signal peptides from prolipoproteins. The sequence is that of Lipoprotein signal peptidase from Yersinia enterocolitica serotype O:8 / biotype 1B (strain NCTC 13174 / 8081).